Here is a 536-residue protein sequence, read N- to C-terminus: Multifunctional cytochrome P450 monooxygenase af510 (536 aa).

Residues 4-24 traverse the membrane as a helical segment; sequence ELSTLQLSCVAFVAFMAVLVF. N-linked (GlcNAc...) asparagine glycans are attached at residues N210 and N293. Residue C448 participates in heme binding.

The protein belongs to the cytochrome P450 family. Requires heme as cofactor.

It localises to the membrane. It carries out the reaction (+)-exo-beta-bergamotene + 2 reduced [NADPH--hemoprotein reductase] + 3 O2 = 5-dehydro-6-demethoxyfumagillol + 2 oxidized [NADPH--hemoprotein reductase] + 3 H2O + 2 H(+). Its pathway is secondary metabolite biosynthesis; terpenoid biosynthesis. Multifunctional cytochrome P450 monooxygenase; part of the gene cluster that mediates the biosynthesis of fumagillin, a meroterpenoid that has numerous biological activities including irreversible inhibition of human type 2 methionine aminopeptidase (METAP2). Within the pathway, the multifunctional cytochrome P450 monooxygenase af510 acts as a 2,4,6-trichlorophenol monooxygenase that first performs the C-H hydroxylation at the bridgehead C5 position to yield 5R-hydroxyl-beta-trans-bergamotene. Subsequently, a four electron oxidation initiated at C-9 coupled to cleavage of the cyclobutane C5-C8 bond of the bicyclo[3.1.1] core yields the epoxyketone intermediate 5-keto-cordycol. An additional epoxidation reaction also catalyzed by af510 then furnishes the characteristic bisepoxide ketone 5-keto-demethoxyfumagillol. The pathway begins with the conversion of farnesyl pyrophosphate (FPP) to beta-trans-bergamotene by the membrane-bound beta-trans-bergamotene synthase af520. The multifunctional cytochrome P450 monooxygenase af510 then converts beta-trans-bergamotene into 5-keto-demethoxyfumagillol via several oxydation steps. 5-keto-demethoxyfumagillol is then subjected to successive C-6 hydroxylation and O-methylation by the dioxygenase af480 and O-methyltransferase af390-400, respectively, to yield 5-keto-fumagillol, which is then stereoselectively reduced by the keto-reductase af490 to 5R-hydroxy-seco-sesquiterpene. The next step is the polyketide transferase af380-catalyzed transfer of a dodecapentaenoyl group synthesized by the polyketide synthase af370 onto 5R-hydroxy-seco-sesquiterpene which leads to the production of prefumagillin. Finally, oxidative cleavage by the monooxygenase af470 converts prefumagillin to fumagillin. In Aspergillus fumigatus (strain ATCC MYA-4609 / CBS 101355 / FGSC A1100 / Af293) (Neosartorya fumigata), this protein is Multifunctional cytochrome P450 monooxygenase af510.